The sequence spans 142 residues: Large ribosomal subunit protein uL13 (142 aa).

This sequence belongs to the universal ribosomal protein uL13 family. In terms of assembly, part of the 50S ribosomal subunit.

This protein is one of the early assembly proteins of the 50S ribosomal subunit, although it is not seen to bind rRNA by itself. It is important during the early stages of 50S assembly. In Maridesulfovibrio salexigens (strain ATCC 14822 / DSM 2638 / NCIMB 8403 / VKM B-1763) (Desulfovibrio salexigens), this protein is Large ribosomal subunit protein uL13.